Reading from the N-terminus, the 993-residue chain is Importin subunit beta-5 (993 aa).

In terms of domain architecture, Importin N-terminal spans 24 to 100; sequence AELGLRDLEK…RETLLHLLVS (77 aa).

The protein localises to the nucleus. Functionally, required for nuclear protein import and mediates docking of import substrate to distinct nucleoporins. Serves a receptor for nuclear localization signals. Mediates the nuclear import of TATA-binding protein (TBP) and of histones H2A and H2B. The sequence is that of Importin subunit beta-5 (kap114) from Schizosaccharomyces pombe (strain 972 / ATCC 24843) (Fission yeast).